Here is a 187-residue protein sequence, read N- to C-terminus: Large ribosomal subunit protein uL5 (187 aa).

It belongs to the universal ribosomal protein uL5 family. As to quaternary structure, part of the 50S ribosomal subunit; part of the 5S rRNA/L5/L18/L25 subcomplex. Contacts the 5S rRNA and the P site tRNA. Forms a bridge to the 30S subunit in the 70S ribosome.

This is one of the proteins that bind and probably mediate the attachment of the 5S RNA into the large ribosomal subunit, where it forms part of the central protuberance. In the 70S ribosome it contacts protein S13 of the 30S subunit (bridge B1b), connecting the 2 subunits; this bridge is implicated in subunit movement. Contacts the P site tRNA; the 5S rRNA and some of its associated proteins might help stabilize positioning of ribosome-bound tRNAs. This is Large ribosomal subunit protein uL5 from Brachyspira hyodysenteriae (strain ATCC 49526 / WA1).